The primary structure comprises 466 residues: Asparagine--tRNA ligase (466 aa).

Belongs to the class-II aminoacyl-tRNA synthetase family. In terms of assembly, homodimer.

The protein localises to the cytoplasm. It carries out the reaction tRNA(Asn) + L-asparagine + ATP = L-asparaginyl-tRNA(Asn) + AMP + diphosphate + H(+). The chain is Asparagine--tRNA ligase from Vibrio parahaemolyticus serotype O3:K6 (strain RIMD 2210633).